The following is a 280-amino-acid chain: NAD kinase (280 aa).

The Proton acceptor role is filled by aspartate 67. Residues 67-68, arginine 72, 138-139, aspartate 167, alanine 175, 178-183, and glutamine 237 each bind NAD(+); these read DG, ND, and TAYSLS.

This sequence belongs to the NAD kinase family. Requires a divalent metal cation as cofactor.

Its subcellular location is the cytoplasm. The enzyme catalyses NAD(+) + ATP = ADP + NADP(+) + H(+). Involved in the regulation of the intracellular balance of NAD and NADP, and is a key enzyme in the biosynthesis of NADP. Catalyzes specifically the phosphorylation on 2'-hydroxyl of the adenosine moiety of NAD to yield NADP. The sequence is that of NAD kinase from Aeropyrum pernix (strain ATCC 700893 / DSM 11879 / JCM 9820 / NBRC 100138 / K1).